A 66-amino-acid chain; its full sequence is MKPSLIIVTFIVVFMAISCVAADDEQETWIEKRGDCLPHLKRCKENNDCCSKKCKRRGTNPEKRCR.

An N-terminal signal peptide occupies residues 1–22; the sequence is MKPSLIIVTFIVVFMAISCVAA. A propeptide spanning residues 23-31 is cleaved from the precursor; the sequence is DDEQETWIE. 3 disulfides stabilise this stretch: cysteine 36-cysteine 50, cysteine 43-cysteine 54, and cysteine 49-cysteine 65. Positions 55-57 are essential for stimulation of [3H]ryanodine binding to RYR1; that stretch reads KRR.

It belongs to the scorpion calcin family. Expressed by the venom gland.

The protein resides in the secreted. In terms of biological role, this toxin stabilizes ryanodine receptor 1 (RyR1) opening in a long-lasting subconductance state (35% of the full conductance state). Furthermore, it triggers calcium release from sarcoplasmic vesicles (2 nM are enough to induce a sharp release, and 67% of the total calcium is released after toxin (100 nM) addition) probably by acting as a cell-penetrating peptide (CPP). In addition, it has been shown to dose-dependently stimulate ryanodine binding to RyR1 (EC(50)=0.3 nM). It also augments the bell-shaped calcium-[3H]ryanodine binding curve that is maximal at about 10 uM calcium concentration. It binds a different site as ryanodine. It acts synergistically with caffeine. In vivo, intracerebroventricular injection into mice induces neurotoxic symptoms, followed by death. The chain is Opicalcin-1 from Opistophthalmus carinatus (African yellow leg scorpion).